We begin with the raw amino-acid sequence, 557 residues long: MDGAREVRSPRGSTLTARSWQTEAPLRMLMNNLDPDVAERPDDLVVYGGTGRAARDWASYDGIVRTLTTLGDDETLLVQSGRPVGVLRTHEWAPRVLIANSNLVPDWATWPEFRRLEHLGLTMYGQMTAGSWIYIGTQGILQGTYETFAAVAEKVGRPDDDGVASLAGTLTLTAGCGGMGGAQPLAVTLNGGVCLVVDVDPERLRRRVATRYLDEVADGLDDAVARCEAAKLERRALSVGLVGNAATVYPELLRRGVEIDVVTDQTSAHDPLSYLPEGVELGEWHEAAEAKPEEFTDRARESMARQVAAMVGFLDAGAEVFDYGNSIRDEARQGGYDRAFAFPGFVPAYIRPLFSEGKGPFRWAALSGDPADIAATDRAVLDLFPDDAKLHRWIRAAGERVAYQGLPARICWLGYGERHLAGLRFNEMVASGELSAPIVIGRDHLDAGSVASPYRETEAMADGSDAIADWPLLNALVNTASGATWVSIHHGGGVGIGRSIHAGQVSVADGTELAAAKLERVLTNDPGMGVIRHVDAGYARADEVAAERGVRVPMRES.

NAD(+) is bound by residues 48–49 (GG), glutamine 126, 178–180 (GMG), aspartate 198, arginine 203, 244–245 (NA), 265–269 (QTSAH), 274–275 (YL), and tyrosine 323. Residue cysteine 411 is part of the active site. Glycine 493 contacts NAD(+).

The protein belongs to the urocanase family. NAD(+) is required as a cofactor.

Its subcellular location is the cytoplasm. The catalysed reaction is 4-imidazolone-5-propanoate = trans-urocanate + H2O. Its pathway is amino-acid degradation; L-histidine degradation into L-glutamate; N-formimidoyl-L-glutamate from L-histidine: step 2/3. Its function is as follows. Catalyzes the conversion of urocanate to 4-imidazolone-5-propionate. In Beutenbergia cavernae (strain ATCC BAA-8 / DSM 12333 / CCUG 43141 / JCM 11478 / NBRC 16432 / NCIMB 13614 / HKI 0122), this protein is Urocanate hydratase.